The primary structure comprises 105 residues: Antitoxin YfjZ (105 aa).

This sequence belongs to the CbeA/YafW/YfjZ antitoxin family.

Its function is as follows. Antitoxin component of a type IV toxin-antitoxin (TA) system. Antitoxin that counteracts the effect of cognate toxin YpjF. Also counteracts the effect of non-cognate toxins CbtA and YfkI. The chain is Antitoxin YfjZ (yfjZ) from Escherichia coli (strain K12).